Consider the following 496-residue polypeptide: Anaerobic nitric oxide reductase flavorubredoxin (496 aa).

The interval 30-210 is zinc metallo-hydrolase; sequence TKGTSYNSYL…PFSALVTAKI (181 aa). Residues histidine 79, glutamate 81, aspartate 83, histidine 147, aspartate 166, and histidine 227 each coordinate Fe cation. The Flavodoxin-like domain occupies 254–393; it reads ITIFYDSMSN…LCREHGQFIA (140 aa). FMN contacts are provided by residues 260-264 and 342-369; these read SMSNN and AFGSYGWNGGAVDRIHSRLTDAGFETAV. Residues 444 to 495 enclose the Rubredoxin-like domain; it reads KQCMLCSVCNWVYDPEIGEPNQGVEPNTPWSSVPNDFLCPECHLGKDVFVEI. Fe cation-binding residues include cysteine 449, cysteine 452, cysteine 482, and cysteine 485.

This sequence in the N-terminal section; belongs to the zinc metallo-hydrolase group 3 family. Homotetramer. Requires Fe cation as cofactor. It depends on FMN as a cofactor.

The protein localises to the cytoplasm. Its pathway is nitrogen metabolism; nitric oxide reduction. Anaerobic nitric oxide reductase; uses NADH to detoxify nitric oxide (NO), protecting several 4Fe-4S NO-sensitive enzymes. Has at least 2 reductase partners, only one of which (NorW, flavorubredoxin reductase) has been identified. NO probably binds to the di-iron center; electrons enter from the NorW at rubredoxin and are transferred sequentially to the FMN center and the di-iron center. Also able to function as an aerobic oxygen reductase. In Aliivibrio fischeri (strain ATCC 700601 / ES114) (Vibrio fischeri), this protein is Anaerobic nitric oxide reductase flavorubredoxin.